A 419-amino-acid polypeptide reads, in one-letter code: UDP-N-acetylglucosamine 1-carboxyvinyltransferase (419 aa).

22-23 (KN) lines the phosphoenolpyruvate pocket. Position 95 (Arg-95) interacts with UDP-N-acetyl-alpha-D-glucosamine. Cys-119 functions as the Proton donor in the catalytic mechanism. Cys-119 is subject to 2-(S-cysteinyl)pyruvic acid O-phosphothioketal. UDP-N-acetyl-alpha-D-glucosamine is bound by residues 164 to 167 (KVSV), Asp-308, and Ile-330.

Belongs to the EPSP synthase family. MurA subfamily.

Its subcellular location is the cytoplasm. It carries out the reaction phosphoenolpyruvate + UDP-N-acetyl-alpha-D-glucosamine = UDP-N-acetyl-3-O-(1-carboxyvinyl)-alpha-D-glucosamine + phosphate. The protein operates within cell wall biogenesis; peptidoglycan biosynthesis. Its function is as follows. Cell wall formation. Adds enolpyruvyl to UDP-N-acetylglucosamine. The protein is UDP-N-acetylglucosamine 1-carboxyvinyltransferase of Rickettsia africae (strain ESF-5).